The sequence spans 122 residues: Protein YqjC (122 aa).

Positions Met-1 to Ala-20 are cleaved as a signal peptide. The disordered stretch occupies residues Gln-65–Ile-100. Residues Leu-66–Ile-100 are compositionally biased toward basic and acidic residues.

In Escherichia coli (strain K12), this protein is Protein YqjC (yqjC).